The chain runs to 156 residues: Small ribosomal subunit protein uS7 (156 aa).

This sequence belongs to the universal ribosomal protein uS7 family. As to quaternary structure, part of the 30S ribosomal subunit. Contacts proteins S9 and S11.

Its function is as follows. One of the primary rRNA binding proteins, it binds directly to 16S rRNA where it nucleates assembly of the head domain of the 30S subunit. Is located at the subunit interface close to the decoding center, probably blocks exit of the E-site tRNA. The sequence is that of Small ribosomal subunit protein uS7 from Janthinobacterium sp. (strain Marseille) (Minibacterium massiliensis).